We begin with the raw amino-acid sequence, 147 residues long: Phosphoribosyl-AMP cyclohydrolase 2 (147 aa).

Mg(2+) is bound at residue Asp99. Cys100 lines the Zn(2+) pocket. Residues Asp101 and Asp103 each coordinate Mg(2+). The Zn(2+) site is built by Cys116 and Cys123.

Belongs to the PRA-CH family. In terms of assembly, homodimer. The cofactor is Mg(2+). Requires Zn(2+) as cofactor.

The protein localises to the cytoplasm. It catalyses the reaction 1-(5-phospho-beta-D-ribosyl)-5'-AMP + H2O = 1-(5-phospho-beta-D-ribosyl)-5-[(5-phospho-beta-D-ribosylamino)methylideneamino]imidazole-4-carboxamide. It functions in the pathway amino-acid biosynthesis; L-histidine biosynthesis; L-histidine from 5-phospho-alpha-D-ribose 1-diphosphate: step 3/9. Its function is as follows. Catalyzes the hydrolysis of the adenine ring of phosphoribosyl-AMP. The protein is Phosphoribosyl-AMP cyclohydrolase 2 of Pseudomonas fluorescens (strain ATCC BAA-477 / NRRL B-23932 / Pf-5).